The chain runs to 252 residues: tRNA pseudouridine synthase A (252 aa).

Asp54 serves as the catalytic Nucleophile. Tyr113 provides a ligand contact to substrate.

This sequence belongs to the tRNA pseudouridine synthase TruA family. In terms of assembly, homodimer.

It catalyses the reaction uridine(38/39/40) in tRNA = pseudouridine(38/39/40) in tRNA. Its function is as follows. Formation of pseudouridine at positions 38, 39 and 40 in the anticodon stem and loop of transfer RNAs. This Bacteroides fragilis (strain ATCC 25285 / DSM 2151 / CCUG 4856 / JCM 11019 / LMG 10263 / NCTC 9343 / Onslow / VPI 2553 / EN-2) protein is tRNA pseudouridine synthase A.